A 477-amino-acid chain; its full sequence is Glutamyl-tRNA(Gln) amidotransferase subunit A (477 aa).

Catalysis depends on charge relay system residues lysine 71 and serine 146. Residue serine 170 is the Acyl-ester intermediate of the active site.

Belongs to the amidase family. GatA subfamily. In terms of assembly, heterotrimer of A, B and C subunits.

The catalysed reaction is L-glutamyl-tRNA(Gln) + L-glutamine + ATP + H2O = L-glutaminyl-tRNA(Gln) + L-glutamate + ADP + phosphate + H(+). Functionally, allows the formation of correctly charged Gln-tRNA(Gln) through the transamidation of misacylated Glu-tRNA(Gln) in organisms which lack glutaminyl-tRNA synthetase. The reaction takes place in the presence of glutamine and ATP through an activated gamma-phospho-Glu-tRNA(Gln). This chain is Glutamyl-tRNA(Gln) amidotransferase subunit A, found in Halothermothrix orenii (strain H 168 / OCM 544 / DSM 9562).